The primary structure comprises 713 residues: Ribosomal RNA large subunit methyltransferase K/L (713 aa).

A THUMP domain is found at 43 to 154 (LAYRITLWTR…NGVITIAMNF (112 aa)).

Belongs to the methyltransferase superfamily. RlmKL family.

The protein resides in the cytoplasm. It catalyses the reaction guanosine(2445) in 23S rRNA + S-adenosyl-L-methionine = N(2)-methylguanosine(2445) in 23S rRNA + S-adenosyl-L-homocysteine + H(+). The enzyme catalyses guanosine(2069) in 23S rRNA + S-adenosyl-L-methionine = N(2)-methylguanosine(2069) in 23S rRNA + S-adenosyl-L-homocysteine + H(+). Its function is as follows. Specifically methylates the guanine in position 2445 (m2G2445) and the guanine in position 2069 (m7G2069) of 23S rRNA. This is Ribosomal RNA large subunit methyltransferase K/L from Shewanella sp. (strain ANA-3).